Here is a 441-residue protein sequence, read N- to C-terminus: uncharacterized protein (441 aa).

57–64 serves as a coordination point for ATP; that stretch reads GVRRGGKT.

This is an uncharacterized protein from Methanocaldococcus jannaschii (strain ATCC 43067 / DSM 2661 / JAL-1 / JCM 10045 / NBRC 100440) (Methanococcus jannaschii).